The sequence spans 147 residues: Deoxyuridine 5'-triphosphate nucleotidohydrolase (147 aa).

Substrate is bound by residues 63 to 65 (RSG), N76, and 80 to 82 (TID).

The protein belongs to the dUTPase family. Mg(2+) is required as a cofactor.

The catalysed reaction is dUTP + H2O = dUMP + diphosphate + H(+). It functions in the pathway pyrimidine metabolism; dUMP biosynthesis; dUMP from dCTP (dUTP route): step 2/2. In terms of biological role, this enzyme is involved in nucleotide metabolism: it produces dUMP, the immediate precursor of thymidine nucleotides and it decreases the intracellular concentration of dUTP so that uracil cannot be incorporated into DNA. The sequence is that of Deoxyuridine 5'-triphosphate nucleotidohydrolase from Chlamydia caviae (strain ATCC VR-813 / DSM 19441 / 03DC25 / GPIC) (Chlamydophila caviae).